Consider the following 453-residue polypeptide: Exodeoxyribonuclease 7 large subunit (453 aa).

It belongs to the XseA family. Heterooligomer composed of large and small subunits.

It is found in the cytoplasm. The enzyme catalyses Exonucleolytic cleavage in either 5'- to 3'- or 3'- to 5'-direction to yield nucleoside 5'-phosphates.. Its function is as follows. Bidirectionally degrades single-stranded DNA into large acid-insoluble oligonucleotides, which are then degraded further into small acid-soluble oligonucleotides. In Rickettsia typhi (strain ATCC VR-144 / Wilmington), this protein is Exodeoxyribonuclease 7 large subunit.